Here is an 896-residue protein sequence, read N- to C-terminus: NEDD4-binding protein 1 (896 aa).

A KH-like domain is found at 59-143; the sequence is QEAVHSAKEY…IQQFVKLFEN (85 aa). Phosphoserine is present on Ser226. Residue Thr242 is modified to Phosphothreonine. Phosphoserine occurs at positions 258 and 300. 2 disordered regions span residues 403–430 and 488–507; these read YPET…PKKT and ETDG…VNFV. A compositionally biased stretch (polar residues) spans 414–430; that stretch reads VYSSTNELTTDSTPKKT. Ser562 is modified (phosphoserine). The 153-residue stretch at 617-769 folds into the RNase NYN domain; the sequence is LKHIVIDGSN…LGRSGPRLEE (153 aa). A disordered region spans residues 801–821; sequence GTQAASTSHQPPTRIQGAPSS. The span at 803–813 shows a compositional bias: polar residues; the sequence is QAASTSHQPPT. Positions 849–896 are coCUN; the sequence is RSSAETNELREALLKIFPDSEQRLKIDQILVAHPYMKDLNALSAMVLD.

Belongs to the N4BP1 family. As to quaternary structure, interacts with NEDD4. Interacts with ITCH (via WW domain 2). Proteolytically cleaved by CASP8 downstream of TLR3 or TLR4, leading to its inactivation. Mainly cleaved at Asp-490 by CASP8. Cleaved by caspase-like protein MALT1 in T-cells following TCR-mediated activation, leading to its inactivation and subsequent viral reactivation during HIV-1 infection. Post-translationally, mono- and polyubiquitinated on the CoCUN region. Monoubiquitinated by NEDD4. Polyubiquitinated, leading to its degradation by the proteasome. Sumoylated with SUMO1, abrogating polyubiquitination and subsequent degradation. Desumoylated by SENP1, leading to accumulation in PML nuclear bodies. In terms of tissue distribution, detected in heart, lung, brain, liver, skeletal muscle, pancreas, kidney, spleen, testis and ovary.

The protein resides in the cytoplasm. It is found in the cytosol. Its subcellular location is the nucleus. It localises to the nucleolus. The protein localises to the PML body. Proteolytic cleavage by CASP8 or MALT1 leads to its inactivation. Functionally, potent suppressor of cytokine production that acts as a regulator of innate immune signaling and inflammation. Acts as a key negative regulator of select cytokine and chemokine responses elicited by TRIF-independent Toll-like receptors (TLRs), thereby limiting inflammatory cytokine responses to minor insults. In response to more threatening pathogens, cleaved by CASP8 downstream of TLR3 or TLR4, leading to its inactivation, thereby allowing production of inflammatory cytokines. Acts as a restriction factor against some viruses, such as HIV-1: restricts HIV-1 replication by binding to HIV-1 mRNAs and mediating their degradation via its ribonuclease activity. Also acts as an inhibitor of the E3 ubiquitin-protein ligase ITCH: acts by interacting with the second WW domain of ITCH, leading to compete with ITCH's substrates and impairing ubiquitination of substrates. The protein is NEDD4-binding protein 1 of Homo sapiens (Human).